A 314-amino-acid polypeptide reads, in one-letter code: Ribosomal RNA small subunit methyltransferase H (314 aa).

S-adenosyl-L-methionine contacts are provided by residues 34 to 36, Asp53, Phe82, Asp103, and Gln110; that span reads GGH.

Belongs to the methyltransferase superfamily. RsmH family.

The protein localises to the cytoplasm. The catalysed reaction is cytidine(1402) in 16S rRNA + S-adenosyl-L-methionine = N(4)-methylcytidine(1402) in 16S rRNA + S-adenosyl-L-homocysteine + H(+). Specifically methylates the N4 position of cytidine in position 1402 (C1402) of 16S rRNA. In Limosilactobacillus fermentum (strain NBRC 3956 / LMG 18251) (Lactobacillus fermentum), this protein is Ribosomal RNA small subunit methyltransferase H.